The primary structure comprises 181 residues: Large ribosomal subunit protein uL10 (181 aa).

The protein belongs to the universal ribosomal protein uL10 family. In terms of assembly, part of the ribosomal stalk of the 50S ribosomal subunit. The N-terminus interacts with L11 and the large rRNA to form the base of the stalk. The C-terminus forms an elongated spine to which L12 dimers bind in a sequential fashion forming a multimeric L10(L12)X complex.

Its function is as follows. Forms part of the ribosomal stalk, playing a central role in the interaction of the ribosome with GTP-bound translation factors. The chain is Large ribosomal subunit protein uL10 from Bradyrhizobium diazoefficiens (strain JCM 10833 / BCRC 13528 / IAM 13628 / NBRC 14792 / USDA 110).